A 259-amino-acid chain; its full sequence is Deoxyribose-phosphate aldolase (259 aa).

Asp102 serves as the catalytic Proton donor/acceptor. The Schiff-base intermediate with acetaldehyde role is filled by Lys167. The active-site Proton donor/acceptor is Lys201.

This sequence belongs to the DeoC/FbaB aldolase family. DeoC type 2 subfamily.

It localises to the cytoplasm. It carries out the reaction 2-deoxy-D-ribose 5-phosphate = D-glyceraldehyde 3-phosphate + acetaldehyde. It functions in the pathway carbohydrate degradation; 2-deoxy-D-ribose 1-phosphate degradation; D-glyceraldehyde 3-phosphate and acetaldehyde from 2-deoxy-alpha-D-ribose 1-phosphate: step 2/2. Functionally, catalyzes a reversible aldol reaction between acetaldehyde and D-glyceraldehyde 3-phosphate to generate 2-deoxy-D-ribose 5-phosphate. This chain is Deoxyribose-phosphate aldolase, found in Shigella boydii serotype 4 (strain Sb227).